We begin with the raw amino-acid sequence, 834 residues long: Protein ROOT HAIR DEFECTIVE 3 homolog 2 (834 aa).

Over 1–683 the chain is Cytoplasmic; sequence MGENDDGCST…EAHKRNNNWL (683 aa). The GB1/RHD3-type G domain occupies 37–252; that stretch reads GLSYAVVAIM…ISPGGLAGDR (216 aa). 47-54 is a GTP binding site; sequence GPQSSGKS. The stretch at 214 to 241 forms a coiled coil; it reads MIVALSSYEEKEKQFEQEVAELRQRFFH. The chain crosses the membrane as a helical span at residues 684 to 704; sequence PPAWAIVLMIVLGFNEFMMLL. At 705 to 707 the chain is on the lumenal side; it reads KNP. A helical transmembrane segment spans residues 708-728; sequence LYLLGFFVAFLLSKALWVQLD. Residues 729–834 are Cytoplasmic-facing; it reads IPREFQHGAV…NVQESEISQM (106 aa). A compositionally biased stretch (polar residues) spans 767–783; it reads TTQEVPDLSASQTYRQQ. The segment at 767–834 is disordered; sequence TTQEVPDLSA…NVQESEISQM (68 aa). Over residues 784–803 the composition is skewed to low complexity; that stretch reads SPSHSISSTISESVASNISS. A compositionally biased stretch (polar residues) spans 823–834; that stretch reads TNNVQESEISQM.

Belongs to the TRAFAC class dynamin-like GTPase superfamily. GB1/RHD3 GTPase family. RHD3 subfamily. Expressed in roots, leaves, stems and flowers.

The protein resides in the endoplasmic reticulum membrane. In terms of biological role, probable GTP-binding protein that may be involved in cell development. The protein is Protein ROOT HAIR DEFECTIVE 3 homolog 2 of Arabidopsis thaliana (Mouse-ear cress).